We begin with the raw amino-acid sequence, 147 residues long: Large ribosomal subunit protein uL13 (147 aa).

Belongs to the universal ribosomal protein uL13 family. In terms of assembly, part of the 50S ribosomal subunit.

Functionally, this protein is one of the early assembly proteins of the 50S ribosomal subunit, although it is not seen to bind rRNA by itself. It is important during the early stages of 50S assembly. The protein is Large ribosomal subunit protein uL13 of Leuconostoc mesenteroides subsp. mesenteroides (strain ATCC 8293 / DSM 20343 / BCRC 11652 / CCM 1803 / JCM 6124 / NCDO 523 / NBRC 100496 / NCIMB 8023 / NCTC 12954 / NRRL B-1118 / 37Y).